Here is a 156-residue protein sequence, read N- to C-terminus: Small ribosomal subunit protein uS7 (156 aa).

It belongs to the universal ribosomal protein uS7 family. As to quaternary structure, part of the 30S ribosomal subunit. Contacts proteins S9 and S11.

Its function is as follows. One of the primary rRNA binding proteins, it binds directly to 16S rRNA where it nucleates assembly of the head domain of the 30S subunit. Is located at the subunit interface close to the decoding center, probably blocks exit of the E-site tRNA. The polypeptide is Small ribosomal subunit protein uS7 (Nitratidesulfovibrio vulgaris (strain DSM 19637 / Miyazaki F) (Desulfovibrio vulgaris)).